Reading from the N-terminus, the 500-residue chain is NAD(P)H-quinone oxidoreductase chain 4, chloroplastic (500 aa).

The next 14 helical transmembrane spans lie at 4-24 (FPWL…IFFL), 35-55 (YTIC…CYHF), 87-107 (LGPV…AWPV), 113-130 (LFHF…GSFS), 134-154 (LLLF…LLSM), 167-187 (FILY…GVGL), 207-227 (VALE…KLPI), 242-262 (HYST…YGLI), 272-292 (AHSI…IYAA), 305-325 (IAYS…SITD), 330-350 (GAIL…FLAG), 386-406 (LALP…GIIT), 416-436 (IAIT…LLSM), and 462-482 (LFVS…PDFV).

The protein belongs to the complex I subunit 4 family.

It is found in the plastid. Its subcellular location is the chloroplast thylakoid membrane. It carries out the reaction a plastoquinone + NADH + (n+1) H(+)(in) = a plastoquinol + NAD(+) + n H(+)(out). The catalysed reaction is a plastoquinone + NADPH + (n+1) H(+)(in) = a plastoquinol + NADP(+) + n H(+)(out). The polypeptide is NAD(P)H-quinone oxidoreductase chain 4, chloroplastic (Helianthus annuus (Common sunflower)).